Here is a 780-residue protein sequence, read N- to C-terminus: Mediator of RNA polymerase II transcription subunit 15 (780 aa).

An interaction with nhr-49 region spans residues 1–124; it reads MSEEDWPSPK…PQPTSAQARN (124 aa). Residues 2–96 form an interaction with sbp-1 region; sequence SEEDWPSPKF…SPPCTTAALL (95 aa). Disordered regions lie at residues 91-152, 166-363, and 564-597; these read TTAA…APSA, PSPD…QGMM, and GPGP…GTPN. Residues 125-139 are compositionally biased toward low complexity; that stretch reads PPVTVATTQASTTPS. The span at 225 to 245 shows a compositional bias: gly residues; the sequence is PPNGYGGYGMMNGPPGSGAPM. Polar residues predominate over residues 296–316; sequence QGATPTGPSSVLESLINQPQQ. 2 stretches are compositionally biased toward low complexity: residues 333 to 353 and 574 to 594; these read AAQR…QQQR and SMSG…NPMG.

The protein belongs to the Mediator complex subunit 15 family. Component of the Mediator complex. Interacts with nhr-49, nhr-64 and sbp-1. Expressed in the intestine and head neurons.

It is found in the nucleus. Functionally, component of the Mediator complex, a coactivator involved in regulated gene transcription of nearly all RNA polymerase II-dependent genes. Mediator functions as a bridge to convey information from gene-specific regulatory proteins to the basal RNA polymerase II transcription machinery. Mediator is recruited to promoters by direct interactions with regulatory proteins and serves as a scaffold for the assembly of a functional preinitiation complex with RNA polymerase II and the general transcription factors. Required for regulated expression of genes controlling fatty acid desaturation by transcription factors including sbp-1 and nhr-49. Involved in the response to simulated microgravity, in concert with sbp-1, probably acting in the intestine. The polypeptide is Mediator of RNA polymerase II transcription subunit 15 (mdt-15) (Caenorhabditis elegans).